The sequence spans 142 residues: Large ribosomal subunit protein uL16 (142 aa).

It belongs to the universal ribosomal protein uL16 family. In terms of assembly, part of the 50S ribosomal subunit.

Binds 23S rRNA and is also seen to make contacts with the A and possibly P site tRNAs. The sequence is that of Large ribosomal subunit protein uL16 from Gemmatimonas aurantiaca (strain DSM 14586 / JCM 11422 / NBRC 100505 / T-27).